The primary structure comprises 271 residues: Virulence regulon transcriptional activator VirF (271 aa).

Residues 167–265 (ERLQKFMEEN…GCTPSQARLT (99 aa)) form the HTH araC/xylS-type domain. DNA-binding regions (H-T-H motif) lie at residues 184–205 (SKFAREFGMGLTTFKELFGTVY) and 232–255 (IVDIAMEAGFSSQSYFTQSYRRRF).

Functionally, transcriptional activator of the Yersinia virulence regulon. This chain is Virulence regulon transcriptional activator VirF (virF), found in Yersinia enterocolitica.